Reading from the N-terminus, the 258-residue chain is Type III pantothenate kinase (258 aa).

9–16 is a binding site for ATP; the sequence is DIGNTSVN. 110 to 113 contacts substrate; that stretch reads GADR. Asp-112 acts as the Proton acceptor in catalysis. Residue Asp-132 coordinates K(+). An ATP-binding site is contributed by Thr-135. Position 187 (Thr-187) interacts with substrate.

This sequence belongs to the type III pantothenate kinase family. Homodimer. It depends on NH4(+) as a cofactor. The cofactor is K(+).

It localises to the cytoplasm. The catalysed reaction is (R)-pantothenate + ATP = (R)-4'-phosphopantothenate + ADP + H(+). The protein operates within cofactor biosynthesis; coenzyme A biosynthesis; CoA from (R)-pantothenate: step 1/5. Catalyzes the phosphorylation of pantothenate (Pan), the first step in CoA biosynthesis. The polypeptide is Type III pantothenate kinase (Dehalococcoides mccartyi (strain ATCC BAA-2266 / KCTC 15142 / 195) (Dehalococcoides ethenogenes (strain 195))).